A 773-amino-acid polypeptide reads, in one-letter code: ATP-dependent zinc metalloprotease YME1L1 (773 aa).

Topologically, residues 1–295 (MFSLSSTVQP…TNDSLRRTRL (295 aa)) are mitochondrial matrix. Residues 296 to 316 (ILFVLLLFGIYGLLKNPFLSV) traverse the membrane as a helical segment. The Mitochondrial intermembrane segment spans residues 317-773 (RFRTTTGLDS…VLEGKKLEVR (457 aa)). 6 residues coordinate ATP: Val341, Thr383, Gly384, Lys385, Thr386, and Leu387. His599 serves as a coordination point for Zn(2+). Glu600 is an active-site residue. Positions 603 and 677 each coordinate Zn(2+).

In the N-terminal section; belongs to the AAA ATPase family. It in the C-terminal section; belongs to the peptidase M41 family. In terms of assembly, homohexamer; may also form heterohexamers. Exists in several complexes of 600-1100 kDa. Interacts with AFG1L. Zn(2+) is required as a cofactor. Post-translationally, proteolytically processed by mitochondrial processing peptidase (MPP) to generate the mature form. Degraded in an OMA1-dependent manner in response to oxidative stress. High expression in cardiac and skeletal muscle mitochondria.

The protein resides in the mitochondrion inner membrane. Its subcellular location is the mitochondrion. The enzyme catalyses ATP + H2O = ADP + phosphate + H(+). ATP-dependent metalloprotease that catalyzes the degradation of folded and unfolded proteins with a suitable degron sequence in the mitochondrial intermembrane region. Plays an important role in regulating mitochondrial morphology and function by cleaving OPA1 at position S2, giving rise to a form of OPA1 that promotes maintenance of normal mitochondrial structure and mitochondrial protein metabolism. Ensures cell proliferation, maintains normal cristae morphology and complex I respiration activity, promotes antiapoptotic activity and protects mitochondria from the accumulation of oxidatively damaged membrane proteins. Required to control the accumulation of nonassembled respiratory chain subunits (NDUFB6, OX4 and ND1). Involved in the mitochondrial adaptation in response to various signals, such as stress or developmental cues, by mediating degradation of mitochondrial proteins to rewire the mitochondrial proteome. Catalyzes degradation of mitochondrial proteins, such as translocases, lipid transfer proteins and metabolic enzymes in response to nutrient starvation in order to limit mitochondrial biogenesis: mechanistically, YME1L is activated by decreased phosphatidylethanolamine levels caused by LPIN1 activity in response to mTORC1 inhibition. Acts as a regulator of adult neural stem cell self-renewal by promoting mitochondrial proteome rewiring, preserving neural stem and progenitor cells self-renewal. Required for normal, constitutive degradation of PRELID1. Catalyzes the degradation of OMA1 in response to membrane depolarization. Mediates degradation of TIMM17A downstream of the integrated stress response (ISR). Catalyzes degradation of MICU1 when MICU1 is not assembled via an interchain disulfide. The protein is ATP-dependent zinc metalloprotease YME1L1 (YME1L1) of Homo sapiens (Human).